The sequence spans 102 residues: Antimicrobial peptide 1 (102 aa).

A signal peptide spans 1-26; that stretch reads MASTKLFFSVITVMMLIAMASEMVNG. 3 disulfides stabilise this stretch: Cys-37/Cys-90, Cys-47/Cys-102, and Cys-49/Cys-75.

The protein resides in the secreted. Its function is as follows. Antimicrobial peptide which inhibits the growth of a variety of fungi, oomycetes, Gram-positive bacterial phytopatogenes and S.cerevisiae in vitro. No activity against E.coli. The sequence is that of Antimicrobial peptide 1 from Macadamia integrifolia (Macadamia nut).